Here is a 104-residue protein sequence, read N- to C-terminus: MNNTEFHELVDAKLQLLEDMIDDSGADIEPIITGNVLTLEFENRSQIVINKQEPMHEIWLASKSGGFHFAYTDEKWTCSKTGVEFIEMVKEECQKHADEVIQWA.

The protein belongs to the frataxin family.

Involved in iron-sulfur (Fe-S) cluster assembly. May act as a regulator of Fe-S biogenesis. This is Iron-sulfur cluster assembly protein CyaY from Aliivibrio salmonicida (strain LFI1238) (Vibrio salmonicida (strain LFI1238)).